Reading from the N-terminus, the 382-residue chain is Mannitol-1-phosphate 5-dehydrogenase (382 aa).

3-14 contacts NAD(+); the sequence is ALHFGAGNIGRG.

This sequence belongs to the mannitol dehydrogenase family.

It carries out the reaction D-mannitol 1-phosphate + NAD(+) = beta-D-fructose 6-phosphate + NADH + H(+). The sequence is that of Mannitol-1-phosphate 5-dehydrogenase from Klebsiella pneumoniae (strain 342).